We begin with the raw amino-acid sequence, 455 residues long: Hexokinase-2 (455 aa).

Positions 3–445 (ANFQQAVKKL…SGIGAALCAL (443 aa)) constitute a Hexokinase domain. The tract at residues 57–195 (TGAETGDFLA…NLPIRIEAVI (139 aa)) is hexokinase small subdomain. 68–73 (DFGGTN) contributes to the ATP binding site. Substrate contacts are provided by residues 144 to 145 (SY), 161 to 162 (TK), and 196 to 197 (ND). Residues 196–434 (NDTVGTLVTR…KLISIGIAKD (239 aa)) are hexokinase large subdomain. Thr-222 is a binding site for ATP. Positions 225, 252, and 283 each coordinate substrate. ATP is bound by residues 288–289 (GM), 325–329 (TSVLS), and 400–404 (SLVEH).

It belongs to the hexokinase family. As to quaternary structure, monomer.

It carries out the reaction a D-hexose + ATP = a D-hexose 6-phosphate + ADP + H(+). The enzyme catalyses D-mannose + ATP = D-mannose 6-phosphate + ADP + H(+). The catalysed reaction is D-fructose + ATP = D-fructose 6-phosphate + ADP + H(+). It catalyses the reaction D-glucose + ATP = D-glucose 6-phosphate + ADP + H(+). It participates in carbohydrate metabolism; hexose metabolism. The protein operates within carbohydrate degradation; glycolysis; D-glyceraldehyde 3-phosphate and glycerone phosphate from D-glucose: step 1/4. Catalyzes the phosphorylation of hexose (six-carbon sugars) to hexose 6-phosphate. Phosphorylates D-glucose, D-fructose and D-mannose. Compared to hxk1, has a much higher affinity for D-glucose. Constitutes the initial enzyme of glycolysis by catalyzing the phosphorylation of glucose to D-glucose 6-phosphate. The polypeptide is Hexokinase-2 (Schizosaccharomyces pombe (strain 972 / ATCC 24843) (Fission yeast)).